The following is a 143-amino-acid chain: MSGRGKTGGKARAKAKSRSSRAGLQFPVGRVHRLLRKGHYAERVGAGAPVYLAAVLEYLTAEILELAGNAARDNKKTRIIPRHLQLAIRNDEELNKLLGGVTIAQGGVLPNIQAVLLPKKTSATVGPKAPSGGKKATQASQEY.

Residues 1–22 are disordered; that stretch reads MSGRGKTGGKARAKAKSRSSRA. S2 carries the post-translational modification N-acetylserine. Phosphoserine is present on S2. N6-acetyllysine is present on residues K6 and K10. Basic residues predominate over residues 7–19; that stretch reads TGGKARAKAKSRS. Residue K10 is modified to N6-lactoyllysine; alternate. Residues K14 and K16 each participate in a glycyl lysine isopeptide (Lys-Gly) (interchain with G-Cter in ubiquitin) cross-link. K37 carries the N6-acetyllysine modification. Residue K120 forms a Glycyl lysine isopeptide (Lys-Gly) (interchain with G-Cter in ubiquitin) linkage. A disordered region spans residues 121–143; that stretch reads TSATVGPKAPSGGKKATQASQEY. S122 carries the post-translational modification Phosphoserine. Residues K128 and K135 each participate in a glycyl lysine isopeptide (Lys-Gly) (interchain with G-Cter in SUMO2) cross-link. Phosphoserine; by ATM, ATR and PRKDC is present on S140. The short motif at 140–141 is the [ST]-Q motif element; that stretch reads SQ. At Y143 the chain carries Phosphotyrosine; by WSTF.

The protein belongs to the histone H2A family. The nucleosome is a histone octamer containing two molecules each of H2A, H2B, H3 and H4 assembled in one H3-H4 heterotetramer and two H2A-H2B heterodimers. The octamer wraps approximately 147 bp of DNA. Interacts with numerous proteins required for DNA damage signaling and repair when phosphorylated on Ser-140. These include MDC1, TP53BP1, BRCA1 and the MRN complex, composed of MRE11, RAD50, and NBN. Interaction with the MRN complex is mediated at least in part by NBN. Also interacts with DHX9/NDHII when phosphorylated on Ser-140 and MCPH1 when phosphorylated at Ser-140 or Tyr-143. Interacts with ARRB2; the interaction is detected in the nucleus upon OR1D2 stimulation. Interacts with WRAP53/TCAB1. Interacts with HDGFL2. Interacts with DNA damage up-regulated protein DDUP. Forms a complex with DDUP and RAD18 following DDUP phosphorylation. In terms of assembly, (Microbial infection) Interacts with Epstein-Barr virus protein EBNA6. In terms of processing, phosphorylated by VRK1. Phosphorylated on Ser-140 (to form gamma-H2AX or H2AX139ph) in response to DNA double strand breaks (DSBs) generated by exogenous genotoxic agents and by stalled replication forks, and may also occur during meiotic recombination events and immunoglobulin class switching in lymphocytes. Phosphorylation can extend up to several thousand nucleosomes from the actual site of the DSB and may mark the surrounding chromatin for recruitment of proteins required for DNA damage signaling and repair. Widespread phosphorylation may also serve to amplify the damage signal or aid repair of persistent lesions. Phosphorylation of Ser-140 (H2AX139ph) in response to ionizing radiation is mediated by both ATM and PRKDC while defects in DNA replication induce Ser-140 phosphorylation (H2AX139ph) subsequent to activation of ATR and PRKDC. Dephosphorylation of Ser-140 by PP2A is required for DNA DSB repair. In meiosis, Ser-140 phosphorylation (H2AX139ph) may occur at synaptonemal complexes during leptotene as an ATM-dependent response to the formation of programmed DSBs by SPO11. Ser-140 phosphorylation (H2AX139ph) may subsequently occurs at unsynapsed regions of both autosomes and the XY bivalent during zygotene, downstream of ATR and BRCA1 activation. Ser-140 phosphorylation (H2AX139ph) may also be required for transcriptional repression of unsynapsed chromatin and meiotic sex chromosome inactivation (MSCI), whereby the X and Y chromosomes condense in pachytene to form the heterochromatic XY-body. During immunoglobulin class switch recombination in lymphocytes, Ser-140 phosphorylation (H2AX139ph) may occur at sites of DNA-recombination subsequent to activation of the activation-induced cytidine deaminase AICDA. Phosphorylation at Tyr-143 (H2AXY142ph) by BAZ1B/WSTF determines the relative recruitment of either DNA repair or pro-apoptotic factors. Phosphorylation at Tyr-143 (H2AXY142ph) favors the recruitment of APBB1/FE65 and pro-apoptosis factors such as MAPK8/JNK1, triggering apoptosis. In contrast, dephosphorylation of Tyr-143 by EYA proteins (EYA1, EYA2, EYA3 or EYA4) favors the recruitment of MDC1-containing DNA repair complexes to the tail of phosphorylated Ser-140 (H2AX139ph). Post-translationally, monoubiquitination of Lys-120 (H2AXK119ub) by RING1 and RNF2/RING2 complex gives a specific tag for epigenetic transcriptional repression. Following DNA double-strand breaks (DSBs), it is ubiquitinated through 'Lys-63' linkage of ubiquitin moieties by the E2 ligase UBE2N and the E3 ligases RNF8 and RNF168, leading to the recruitment of repair proteins to sites of DNA damage. Ubiquitination at Lys-14 and Lys-16 (H2AK13Ub and H2AK15Ub, respectively) in response to DNA damage is initiated by RNF168 that mediates monoubiquitination at these 2 sites, and 'Lys-63'-linked ubiquitin are then conjugated to monoubiquitin; RNF8 is able to extend 'Lys-63'-linked ubiquitin chains in vitro. H2AK119Ub and ionizing radiation-induced 'Lys-63'-linked ubiquitination (H2AK13Ub and H2AK15Ub) are distinct events. Acetylation at Lys-6 (H2AXK5ac) by KAT5 component of the NuA4 histone acetyltransferase complex promotes NBN/NBS1 assembly at the sites of DNA damage. Acetylation at Lys-37 increases in S and G2 phases. This modification has been proposed to play a role in DNA double-strand break repair.

It localises to the nucleus. The protein resides in the chromosome. Functionally, variant histone H2A which replaces conventional H2A in a subset of nucleosomes. Nucleosomes wrap and compact DNA into chromatin, limiting DNA accessibility to the cellular machineries which require DNA as a template. Histones thereby play a central role in transcription regulation, DNA repair, DNA replication and chromosomal stability. DNA accessibility is regulated via a complex set of post-translational modifications of histones, also called histone code, and nucleosome remodeling. Required for checkpoint-mediated arrest of cell cycle progression in response to low doses of ionizing radiation and for efficient repair of DNA double strand breaks (DSBs) specifically when modified by C-terminal phosphorylation. This chain is Histone H2AX, found in Homo sapiens (Human).